Reading from the N-terminus, the 267-residue chain is MPHTEHIWRNVDAVRRQAPLVHSITNFVVMNVTANALLAAGASPIMAHAREEMAELVNIVSSLVLNIGTLSAPWIDSMFLAGAAAHERGIPVVLDPVGAGASTLRTTTAAQLMERVRPAIVRGNGSEIMALAGAAGATRGVDSTRDAHAAADSARALSRRHHCVTVVSGPVDLVTDGDEEVLITGGHELMPRVTGMGCTATVLVAAHAAVAASPLEGAVSGMAAMSAAGSMAAERAAGPGSFAMHFIDALYALSEADIRARVRVGRP.

Position 46 (Met46) interacts with substrate. 2 residues coordinate ATP: Arg122 and Ser168. Gly195 lines the substrate pocket.

Belongs to the Thz kinase family. The cofactor is Mg(2+).

It carries out the reaction 5-(2-hydroxyethyl)-4-methylthiazole + ATP = 4-methyl-5-(2-phosphooxyethyl)-thiazole + ADP + H(+). Its pathway is cofactor biosynthesis; thiamine diphosphate biosynthesis; 4-methyl-5-(2-phosphoethyl)-thiazole from 5-(2-hydroxyethyl)-4-methylthiazole: step 1/1. Its function is as follows. Catalyzes the phosphorylation of the hydroxyl group of 4-methyl-5-beta-hydroxyethylthiazole (THZ). The protein is Hydroxyethylthiazole kinase of Nitratidesulfovibrio vulgaris (strain DSM 19637 / Miyazaki F) (Desulfovibrio vulgaris).